Reading from the N-terminus, the 242-residue chain is MAPK-interacting and spindle-stabilizing protein-like (242 aa).

Disordered stretches follow at residues 1–145 (MSDE…SLGP) and 192–242 (PPGA…HSYH). Serine 2 carries the post-translational modification N-acetylserine. Phosphoserine is present on residues serine 2, serine 6, and serine 15. Polar residues predominate over residues 13-29 (EQSSAKPPAVTNTKAGH). The span at 30 to 43 (SSQGWPGSSPWSNP) shows a compositional bias: low complexity. Composition is skewed to pro residues over residues 44-53 (SAPPAMPSGL) and 75-114 (SMPP…PGPT). Residues 192–210 (PPGAWGPAAPYPGPAGSYP) are compositionally biased toward low complexity.

The protein belongs to the MISS family.

The polypeptide is MAPK-interacting and spindle-stabilizing protein-like (Mapk1ip1l) (Mus musculus (Mouse)).